The following is a 504-amino-acid chain: Anaerobic nitric oxide reductase transcription regulator NorR (504 aa).

Asp57 carries the post-translational modification 4-aspartylphosphate. Residues 187-416 (MIGLSPGMTQ…LEHAIHRAVV (230 aa)) enclose the Sigma-54 factor interaction domain. Residues 215-222 (GETGTGKE) and 278-287 (ADNGTLFLDE) each bind ATP. Positions 479–498 (WAACARMLETDVANLHRLAK) form a DNA-binding region, H-T-H motif.

It functions in the pathway nitrogen metabolism; nitric oxide reduction. Its function is as follows. Required for the expression of anaerobic nitric oxide (NO) reductase, acts as a transcriptional activator for at least the norVW operon. Activation also requires sigma-54. The chain is Anaerobic nitric oxide reductase transcription regulator NorR from Shigella boydii serotype 4 (strain Sb227).